We begin with the raw amino-acid sequence, 286 residues long: GTP-binding protein 8 (286 aa).

Residues 105 to 278 (KQPEVCFMGR…RCFIAHVTGK (174 aa)) form the EngB-type G domain. GTP contacts are provided by residues 113–120 (GRSNVGKS), 142–146 (GHTKK), 160–163 (DMPG), 222–225 (TKID), and 257–259 (VSS). Mg(2+)-binding residues include Ser-120 and Thr-144.

This sequence belongs to the TRAFAC class TrmE-Era-EngA-EngB-Septin-like GTPase superfamily. EngB GTPase family. It depends on Mg(2+) as a cofactor.

The protein is GTP-binding protein 8 (gtpbp8) of Danio rerio (Zebrafish).